We begin with the raw amino-acid sequence, 206 residues long: Adenylate kinase (206 aa).

10–15 (GAGKGT) lines the ATP pocket. Residues 30 to 59 (STGDMLRAAVAAGTPVGLKAKDIMASGGLV) are NMP. AMP is bound by residues Thr31, Arg36, 57–59 (GLV), 85–88 (GFPR), and Gln92. The interval 126-142 (NRVAETTARGEQVRADD) is LID. Arg127 serves as a coordination point for ATP. AMP is bound by residues Arg139 and Arg150. Met178 contacts ATP.

The protein belongs to the adenylate kinase family. Monomer.

It localises to the cytoplasm. The catalysed reaction is AMP + ATP = 2 ADP. The protein operates within purine metabolism; AMP biosynthesis via salvage pathway; AMP from ADP: step 1/1. In terms of biological role, catalyzes the reversible transfer of the terminal phosphate group between ATP and AMP. Plays an important role in cellular energy homeostasis and in adenine nucleotide metabolism. The chain is Adenylate kinase from Nitrobacter winogradskyi (strain ATCC 25391 / DSM 10237 / CIP 104748 / NCIMB 11846 / Nb-255).